Here is a 428-residue protein sequence, read N- to C-terminus: Phosphomethylpyrimidine synthase 2 (428 aa).

Residues M94, Y123, H162, 184 to 186 (SRG), 225 to 228 (NGMR), and E264 contribute to the substrate site. H268 serves as a coordination point for Zn(2+). Y291 serves as a coordination point for substrate. H332 is a binding site for Zn(2+). Residues C408, C411, and C415 each coordinate [4Fe-4S] cluster.

Belongs to the ThiC family. It depends on [4Fe-4S] cluster as a cofactor.

It catalyses the reaction 5-amino-1-(5-phospho-beta-D-ribosyl)imidazole + S-adenosyl-L-methionine = 4-amino-2-methyl-5-(phosphooxymethyl)pyrimidine + CO + 5'-deoxyadenosine + formate + L-methionine + 3 H(+). It participates in cofactor biosynthesis; thiamine diphosphate biosynthesis. Functionally, catalyzes the synthesis of the hydroxymethylpyrimidine phosphate (HMP-P) moiety of thiamine from aminoimidazole ribotide (AIR) in a radical S-adenosyl-L-methionine (SAM)-dependent reaction. In Methanosarcina mazei (strain ATCC BAA-159 / DSM 3647 / Goe1 / Go1 / JCM 11833 / OCM 88) (Methanosarcina frisia), this protein is Phosphomethylpyrimidine synthase 2.